The following is a 209-amino-acid chain: Uracil phosphoribosyltransferase (209 aa).

5-phospho-alpha-D-ribose 1-diphosphate-binding positions include arginine 79, arginine 104, and 131–139 (DPMLATGGS). Uracil is bound by residues isoleucine 194 and 199 to 201 (GDA). Aspartate 200 contacts 5-phospho-alpha-D-ribose 1-diphosphate.

This sequence belongs to the UPRTase family. Mg(2+) is required as a cofactor.

The enzyme catalyses UMP + diphosphate = 5-phospho-alpha-D-ribose 1-diphosphate + uracil. Its pathway is pyrimidine metabolism; UMP biosynthesis via salvage pathway; UMP from uracil: step 1/1. Allosterically activated by GTP. Functionally, catalyzes the conversion of uracil and 5-phospho-alpha-D-ribose 1-diphosphate (PRPP) to UMP and diphosphate. The chain is Uracil phosphoribosyltransferase from Streptococcus suis (strain 05ZYH33).